Here is a 367-residue protein sequence, read N- to C-terminus: UDP-N-acetylglucosamine--N-acetylmuramyl-(pentapeptide) pyrophosphoryl-undecaprenol N-acetylglucosamine transferase (367 aa).

UDP-N-acetyl-alpha-D-glucosamine is bound by residues 15–17 (TGG), Asn-127, Arg-163, Ser-191, Ile-249, and Gln-294.

It belongs to the glycosyltransferase 28 family. MurG subfamily.

The protein resides in the cell inner membrane. The catalysed reaction is di-trans,octa-cis-undecaprenyl diphospho-N-acetyl-alpha-D-muramoyl-L-alanyl-D-glutamyl-meso-2,6-diaminopimeloyl-D-alanyl-D-alanine + UDP-N-acetyl-alpha-D-glucosamine = di-trans,octa-cis-undecaprenyl diphospho-[N-acetyl-alpha-D-glucosaminyl-(1-&gt;4)]-N-acetyl-alpha-D-muramoyl-L-alanyl-D-glutamyl-meso-2,6-diaminopimeloyl-D-alanyl-D-alanine + UDP + H(+). It participates in cell wall biogenesis; peptidoglycan biosynthesis. Cell wall formation. Catalyzes the transfer of a GlcNAc subunit on undecaprenyl-pyrophosphoryl-MurNAc-pentapeptide (lipid intermediate I) to form undecaprenyl-pyrophosphoryl-MurNAc-(pentapeptide)GlcNAc (lipid intermediate II). The polypeptide is UDP-N-acetylglucosamine--N-acetylmuramyl-(pentapeptide) pyrophosphoryl-undecaprenol N-acetylglucosamine transferase (Burkholderia mallei (strain NCTC 10247)).